A 1200-amino-acid chain; its full sequence is Nuclear pore complex protein Nup133 (1200 aa).

The interval 1–28 (MERNLQKQLYGISRESSPGARRYSMPAA) is disordered.

The protein belongs to the nucleoporin Nup133 family. Forms part of the Nup107-Nup160 subcomplex in the nuclear pore.

Its subcellular location is the nucleus. It localises to the nuclear pore complex. In terms of biological role, probable component of the nuclear pore complex (NPC). Plays a role in NPC assembly and/or maintenance. The chain is Nuclear pore complex protein Nup133 from Drosophila melanogaster (Fruit fly).